A 194-amino-acid polypeptide reads, in one-letter code: Imidazoleglycerol-phosphate dehydratase (194 aa).

This sequence belongs to the imidazoleglycerol-phosphate dehydratase family.

It is found in the cytoplasm. The enzyme catalyses D-erythro-1-(imidazol-4-yl)glycerol 3-phosphate = 3-(imidazol-4-yl)-2-oxopropyl phosphate + H2O. The protein operates within amino-acid biosynthesis; L-histidine biosynthesis; L-histidine from 5-phospho-alpha-D-ribose 1-diphosphate: step 6/9. The polypeptide is Imidazoleglycerol-phosphate dehydratase (Bacillus pumilus (strain SAFR-032)).